A 478-amino-acid chain; its full sequence is Adenosylhomocysteinase (478 aa).

Substrate is bound by residues Thr-67, Asp-144, and Glu-204. Residue 205-207 participates in NAD(+) binding; it reads TTT. Lys-234 and Asp-238 together coordinate substrate. Residues Asn-239, 268 to 273, Glu-291, Asn-326, 347 to 349, and Asn-392 contribute to the NAD(+) site; these read GYGDVG and IGH.

This sequence belongs to the adenosylhomocysteinase family. NAD(+) is required as a cofactor.

The protein resides in the cytoplasm. The enzyme catalyses S-adenosyl-L-homocysteine + H2O = L-homocysteine + adenosine. It functions in the pathway amino-acid biosynthesis; L-homocysteine biosynthesis; L-homocysteine from S-adenosyl-L-homocysteine: step 1/1. Its function is as follows. May play a key role in the regulation of the intracellular concentration of adenosylhomocysteine. This Nitrosomonas europaea (strain ATCC 19718 / CIP 103999 / KCTC 2705 / NBRC 14298) protein is Adenosylhomocysteinase.